Reading from the N-terminus, the 414-residue chain is 2,3-diketo-5-methylthiopentyl-1-phosphate enolase (414 aa).

The active-site Proton acceptor is the K99. Substrate contacts are provided by residues K148, 174–177, H265, G338, and 360–361; these read KDDE and GG. The Mg(2+) site is built by K174, D176, and E177. Position 174 is an N6-carboxylysine (K174).

Belongs to the RuBisCO large chain family. Type IV subfamily. As to quaternary structure, homodimer. The cofactor is Mg(2+).

The enzyme catalyses 5-methylsulfanyl-2,3-dioxopentyl phosphate = 2-hydroxy-5-methylsulfanyl-3-oxopent-1-enyl phosphate. The protein operates within amino-acid biosynthesis; L-methionine biosynthesis via salvage pathway; L-methionine from S-methyl-5-thio-alpha-D-ribose 1-phosphate: step 3/6. Its function is as follows. Catalyzes the enolization of 2,3-diketo-5-methylthiopentyl-1-phosphate (DK-MTP-1-P) into 2-hydroxy-3-keto-5-methylthiopentenyl-1-phosphate (HK-MTPenyl-1-P). In Bacillus cereus (strain ATCC 10987 / NRS 248), this protein is 2,3-diketo-5-methylthiopentyl-1-phosphate enolase.